A 79-amino-acid chain; its full sequence is Conotoxin VnMEKL-024 (79 aa).

The N-terminal stretch at 1–19 (MQKLTILLLVAAVLMSTQA) is a signal peptide. Positions 20–50 (LIRGGVEKRQEAKRNFFSKRKTTAESWWEGE) are excised as a propeptide. Disulfide bonds link cysteine 51/cysteine 65, cysteine 58/cysteine 69, and cysteine 64/cysteine 76.

Belongs to the conotoxin O2 superfamily. As to expression, expressed by the venom duct.

The protein resides in the secreted. This Conus ventricosus (Mediterranean cone) protein is Conotoxin VnMEKL-024.